A 488-amino-acid polypeptide reads, in one-letter code: Protein nucleotidyltransferase YdiU (488 aa).

ATP-binding residues include Gly-91, Gly-93, Arg-94, Lys-114, Asp-126, Gly-127, Arg-177, and Arg-184. Asp-253 serves as the catalytic Proton acceptor. Positions 254 and 263 each coordinate Mg(2+). Asp-263 lines the ATP pocket.

The protein belongs to the SELO family. Requires Mg(2+) as cofactor. Mn(2+) serves as cofactor.

It catalyses the reaction L-seryl-[protein] + ATP = 3-O-(5'-adenylyl)-L-seryl-[protein] + diphosphate. It carries out the reaction L-threonyl-[protein] + ATP = 3-O-(5'-adenylyl)-L-threonyl-[protein] + diphosphate. The catalysed reaction is L-tyrosyl-[protein] + ATP = O-(5'-adenylyl)-L-tyrosyl-[protein] + diphosphate. The enzyme catalyses L-histidyl-[protein] + UTP = N(tele)-(5'-uridylyl)-L-histidyl-[protein] + diphosphate. It catalyses the reaction L-seryl-[protein] + UTP = O-(5'-uridylyl)-L-seryl-[protein] + diphosphate. It carries out the reaction L-tyrosyl-[protein] + UTP = O-(5'-uridylyl)-L-tyrosyl-[protein] + diphosphate. Functionally, nucleotidyltransferase involved in the post-translational modification of proteins. It can catalyze the addition of adenosine monophosphate (AMP) or uridine monophosphate (UMP) to a protein, resulting in modifications known as AMPylation and UMPylation. The protein is Protein nucleotidyltransferase YdiU of Bacillus thuringiensis (strain Al Hakam).